An 89-amino-acid chain; its full sequence is Small ribosomal subunit protein bS20 (89 aa).

Belongs to the bacterial ribosomal protein bS20 family.

Functionally, binds directly to 16S ribosomal RNA. The chain is Small ribosomal subunit protein bS20 from Solidesulfovibrio magneticus (strain ATCC 700980 / DSM 13731 / RS-1) (Desulfovibrio magneticus).